The primary structure comprises 561 residues: Potassium-transporting ATPase potassium-binding subunit (561 aa).

10 helical membrane passes run 4–24 (IVMQ…PLGI), 65–85 (AVSV…VLML), 133–153 (IGLT…LFAV), 177–197 (LYIL…QGVV), 253–273 (FTNL…VVMF), 285–305 (AIMT…TISE), 380–400 (GLYG…LLVG), 417–437 (MVCL…AVAV), 484–504 (MVGA…ALYL), and 528–548 (FIGL…LPAL).

The protein belongs to the KdpA family. As to quaternary structure, the system is composed of three essential subunits: KdpA, KdpB and KdpC.

Its subcellular location is the cell membrane. Its function is as follows. Part of the high-affinity ATP-driven potassium transport (or Kdp) system, which catalyzes the hydrolysis of ATP coupled with the electrogenic transport of potassium into the cytoplasm. This subunit binds the extracellular potassium ions and delivers the ions to the membrane domain of KdpB through an intramembrane tunnel. The chain is Potassium-transporting ATPase potassium-binding subunit from Listeria monocytogenes serotype 4b (strain F2365).